Reading from the N-terminus, the 156-residue chain is MPRRKMVNQRAILPDPKWNSEILSKFINILMVNGKKSISEKIIYTALNNLKKKLNKDHLTIFDLALEKVRPIVEVKSRRVGGSTYQVPIEVRSSRRNALAMRWIIEAARKRKDKSMSLRLAKEIEDALENKGTAVKKREEVHRMAEANKAFAHYRW.

Belongs to the universal ribosomal protein uS7 family. As to quaternary structure, part of the 30S ribosomal subunit. Contacts proteins S9 and S11.

Functionally, one of the primary rRNA binding proteins, it binds directly to 16S rRNA where it nucleates assembly of the head domain of the 30S subunit. Is located at the subunit interface close to the decoding center, probably blocks exit of the E-site tRNA. The sequence is that of Small ribosomal subunit protein uS7 from Wigglesworthia glossinidia brevipalpis.